The primary structure comprises 241 residues: Protein unc-119 homolog B-B (241 aa).

The segment at 1–46 (MSGSNREAALAGQPKDERKKSGGGVINRLKARRVQGKESGTSDQSS) is disordered. Position 132 (Tyr-132) interacts with tetradecanoate.

Belongs to the PDE6D/unc-119 family.

The protein resides in the cell projection. It is found in the cilium. In terms of biological role, myristoyl-binding protein that acts as a cargo adapter: specifically binds the myristoyl moiety of a subset of N-terminally myristoylated proteins and is required for their localization. Plays a key role in localization of proteins to the primary cilium membrane. This is Protein unc-119 homolog B-B (unc119b-b) from Xenopus laevis (African clawed frog).